The primary structure comprises 239 residues: tRNA (guanine-N(1)-)-methyltransferase (239 aa).

S-adenosyl-L-methionine is bound by residues Gly-108 and 127–132; that span reads LGDYVL.

Belongs to the RNA methyltransferase TrmD family. Homodimer.

The protein localises to the cytoplasm. The enzyme catalyses guanosine(37) in tRNA + S-adenosyl-L-methionine = N(1)-methylguanosine(37) in tRNA + S-adenosyl-L-homocysteine + H(+). Functionally, specifically methylates guanosine-37 in various tRNAs. In Streptococcus pneumoniae (strain P1031), this protein is tRNA (guanine-N(1)-)-methyltransferase.